A 316-amino-acid chain; its full sequence is MITEIFPFSVLILALLIDIVLGEPPAALHPVVIIGTAVDRLRRMMPRRKISGMIISVLVISGAVLAGFALIRIAYATGSLAGSSEMGDILALIISSYLLKSTFAFKSLIMTSREIGNLIDEDLDAAKHLLPALVSRNPLNLTHAQARSAVIESLSENYVDTIVSPLFYYVLFSCAGLGVEAALAFKAVSTMDSMLGYKSDDLREIGYVPARLDDILNWIPARLSLPLIMIASPRKSMDILKACMRYHSVTPSPNSGWPMAAAAGALGTRMAKPGVYTILDEGRDPESEDVSSAISLIGRAMVLAALLSALLLILLR.

5 helical membrane-spanning segments follow: residues 1 to 21 (MITEIFPFSVLILALLIDIVL), 50 to 70 (ISGMIISVLVISGAVLAGFAL), 89 to 109 (ILALIISSYLLKSTFAFKSLI), 165 to 185 (PLFYYVLFSCAGLGVEAALAF), and 294 to 314 (ISLIGRAMVLAALLSALLLIL).

This sequence belongs to the CobD/CbiB family.

It is found in the cell membrane. It participates in cofactor biosynthesis; adenosylcobalamin biosynthesis. Its function is as follows. Converts cobyric acid to cobinamide by the addition of aminopropanol on the F carboxylic group. This Methanothrix thermoacetophila (strain DSM 6194 / JCM 14653 / NBRC 101360 / PT) (Methanosaeta thermophila) protein is Probable cobalamin biosynthesis protein CobD.